A 507-amino-acid polypeptide reads, in one-letter code: ATP synthase subunit alpha, chloroplastic (507 aa).

170–177 contributes to the ATP binding site; it reads GDRQTGKT.

The protein belongs to the ATPase alpha/beta chains family. As to quaternary structure, F-type ATPases have 2 components, CF(1) - the catalytic core - and CF(0) - the membrane proton channel. CF(1) has five subunits: alpha(3), beta(3), gamma(1), delta(1), epsilon(1). CF(0) has four main subunits: a, b, b' and c.

The protein localises to the plastid. It is found in the chloroplast thylakoid membrane. It carries out the reaction ATP + H2O + 4 H(+)(in) = ADP + phosphate + 5 H(+)(out). In terms of biological role, produces ATP from ADP in the presence of a proton gradient across the membrane. The alpha chain is a regulatory subunit. The polypeptide is ATP synthase subunit alpha, chloroplastic (Populus alba (White poplar)).